Reading from the N-terminus, the 151-residue chain is Macrodomain Ter protein (151 aa).

The protein belongs to the MatP family. In terms of assembly, homodimer.

It is found in the cytoplasm. In terms of biological role, required for spatial organization of the terminus region of the chromosome (Ter macrodomain) during the cell cycle. Prevents early segregation of duplicated Ter macrodomains during cell division. Binds specifically to matS, which is a 13 bp signature motif repeated within the Ter macrodomain. The polypeptide is Macrodomain Ter protein (Enterobacter sp. (strain 638)).